Reading from the N-terminus, the 136-residue chain is Histone H3.3C (136 aa).

Residues 1 to 44 (MARTKQTARKSTGGKAPRKQLVTKAARKSAPSTGGMKKPHRYRP) are disordered. Arg-3 bears the Asymmetric dimethylarginine; by PRMT6; alternate mark. The residue at position 3 (Arg-3) is a Citrulline; alternate. The residue at position 4 (Thr-4) is a Phosphothreonine; by HASPIN. Lys-5 carries the allysine; alternate modification. Lys-5 is modified (N6,N6,N6-trimethyllysine; alternate). Position 5 is an N6,N6-dimethyllysine; alternate (Lys-5). At Lys-5 the chain carries N6-(2-hydroxyisobutyryl)lysine; alternate. Lys-5 is subject to N6-(beta-hydroxybutyryl)lysine; alternate. An N6-acetyllysine; alternate modification is found at Lys-5. Position 5 is an N6-methyllysine; alternate (Lys-5). A 5-glutamyl dopamine; alternate modification is found at Gln-6. At Gln-6 the chain carries 5-glutamyl serotonin; alternate. Position 7 is a phosphothreonine; by PKC (Thr-7). Arg-9 is modified (symmetric dimethylarginine). N6,N6,N6-trimethyllysine; alternate is present on Lys-10. Lys-10 is modified (N6,N6-dimethyllysine; alternate). An N6-(2-hydroxyisobutyryl)lysine; alternate modification is found at Lys-10. Lys-10 bears the N6-(beta-hydroxybutyryl)lysine; alternate mark. Lys-10 is modified (N6-acetyllysine; alternate). Lys-10 carries the post-translational modification N6-methyllysine; alternate. Lys-10 is modified (N6-lactoyllysine; alternate). Ser-11 bears the ADP-ribosylserine; alternate mark. At Ser-11 the chain carries Phosphoserine; alternate; by AURKB, AURKC, RPS6KA3, RPS6KA4 and RPS6KA5. Residue Thr-12 is modified to Phosphothreonine; by PKC. The residue at position 15 (Lys-15) is an N6-(2-hydroxyisobutyryl)lysine; alternate. Residue Lys-15 is modified to N6-(beta-hydroxybutyryl)lysine; alternate. Position 15 is an N6-acetyllysine; alternate (Lys-15). An N6-lactoyllysine; alternate modification is found at Lys-15. Lys-15 carries the N6-glutaryllysine; alternate modification. Lys-15 carries the post-translational modification N6-succinyllysine; alternate. The residue at position 18 (Arg-18) is an Asymmetric dimethylarginine. 2 positions are modified to N6-(2-hydroxyisobutyryl)lysine; alternate: Lys-19 and Lys-24. An N6-(beta-hydroxybutyryl)lysine; alternate mark is found at Lys-19 and Lys-24. N6-acetyllysine; alternate is present on residues Lys-19 and Lys-24. Lys-19 and Lys-24 each carry N6-methyllysine; alternate. N6-lactoyllysine; alternate is present on residues Lys-19 and Lys-24. 2 positions are modified to N6-glutaryllysine; alternate: Lys-19 and Lys-24. Lys-19 and Lys-24 each carry N6-butyryllysine; alternate. Citrulline is present on Arg-27. Lys-28 is subject to N6,N6,N6-trimethyllysine; alternate. Lys-28 is subject to N6,N6-dimethyllysine; alternate. An N6-(2-hydroxyisobutyryl)lysine; alternate modification is found at Lys-28. Lys-28 is subject to N6-acetyllysine; alternate. N6-methyllysine; alternate is present on Lys-28. Residue Lys-28 is modified to N6-lactoyllysine; alternate. Lys-28 bears the N6-glutaryllysine; alternate mark. Position 29 is an ADP-ribosylserine; alternate (Ser-29). Ser-29 is subject to Phosphoserine; alternate; by AURKB, AURKC and RPS6KA5. Position 32 is a phosphoserine (Ser-32). Lys-37 bears the N6,N6,N6-trimethyllysine; alternate mark. Lys-37 carries the N6,N6-dimethyllysine; alternate modification. Lys-37 carries the post-translational modification N6-(2-hydroxyisobutyryl)lysine; alternate. Residue Lys-37 is modified to N6-acetyllysine; alternate. At Lys-37 the chain carries N6-methyllysine; alternate. The residue at position 38 (Lys-38) is an N6-methyllysine. Tyr-42 is modified (phosphotyrosine). N6,N6,N6-trimethyllysine; alternate is present on Lys-57. The residue at position 57 (Lys-57) is an N6-(2-hydroxyisobutyryl)lysine; alternate. Lys-57 bears the N6-(beta-hydroxybutyryl)lysine; alternate mark. Residue Lys-57 is modified to N6-acetyllysine; alternate. Lys-57 is subject to N6-methyllysine; alternate. Lys-57 carries the N6-lactoyllysine; alternate modification. N6-glutaryllysine; alternate is present on Lys-57. An N6-succinyllysine; alternate modification is found at Lys-57. Ser-58 carries the phosphoserine modification. 2 positions are modified to N6-(2-hydroxyisobutyryl)lysine; alternate: Lys-65 and Lys-80. N6-methyllysine; alternate is present on residues Lys-65 and Lys-80. Lys-80 bears the N6,N6,N6-trimethyllysine; alternate mark. Lys-80 is subject to N6,N6-dimethyllysine; alternate. Lys-80 carries the N6-acetyllysine; alternate modification. Residue Lys-80 is modified to N6-lactoyllysine; alternate. Lys-80 carries the post-translational modification N6-glutaryllysine; alternate. An N6-succinyllysine; alternate modification is found at Lys-80. Position 81 is a phosphothreonine (Thr-81). The residue at position 87 (Ser-87) is a Phosphoserine. A Phosphothreonine modification is found at Thr-108. Residue Lys-116 is modified to N6-acetyllysine; alternate. Residue Lys-116 is modified to N6-glutaryllysine; alternate.

This sequence belongs to the histone H3 family. As to quaternary structure, the nucleosome is a histone octamer containing two molecules each of H2A, H2B, H3 and H4 assembled in one H3-H4 heterotetramer and two H2A-H2B heterodimers. The octamer wraps approximately 147 bp of DNA. In terms of processing, acetylation is generally linked to gene activation. Acetylation on Lys-19 (H3K18ac) favors methylation at Arg-18 (H3R17me). Post-translationally, citrullination at Arg-18 by PADI4 impairs methylation and represses transcription. Asymmetric dimethylation at Arg-18 (H3R17me2a) by CARM1 is linked to gene activation. Asymmetric dimethylation at Arg-3 (H3R2me2a) by PRMT6 is linked to gene repression and is mutually exclusive with H3 Lys-5 methylation (H3K4me2 and H3K4me3). H3R2me2a is present at the 3' of genes regardless of their transcription state and is enriched on inactive promoters, while it is absent on active promoters. In terms of processing, methylation at Lys-5 (H3K4me) and Lys-80 (H3K79me) are linked to gene activation. Methylation at Lys-5 (H3K4me) facilitates subsequent acetylation of H3 and H4. Methylation at Lys-80 (H3K79me) is associated with DNA double-strand break (DSB) responses and is a specific target for TP53BP1. Methylation at Lys-10 (H3K9me) and Lys-28 (H3K27me) are linked to gene repression. Methylation at Lys-10 (H3K9me) is a specific target for HP1 proteins (CBX1, CBX3 and CBX5) and prevents subsequent phosphorylation at Ser-11 (H3S10ph) and acetylation of H3 and H4. Methylation at Lys-5 (H3K4me) and Lys-80 (H3K79me) require preliminary monoubiquitination of H2B at 'Lys-120'. Methylation at Lys-10 (H3K9me) and Lys-28 (H3K27me) are enriched in inactive X chromosome chromatin. Monomethylation at Lys-57 (H3K56me1) by EHMT2/G9A in G1 phase promotes interaction with PCNA and is required for DNA replication. Post-translationally, phosphorylated at Thr-4 (H3T3ph) by HASPIN during prophase and dephosphorylated during anaphase. Phosphorylation at Ser-11 (H3S10ph) by AURKB is crucial for chromosome condensation and cell-cycle progression during mitosis and meiosis. In addition phosphorylation at Ser-11 (H3S10ph) by RPS6KA4 and RPS6KA5 is important during interphase because it enables the transcription of genes following external stimulation, like mitogens, stress, growth factors or UV irradiation and result in the activation of genes, such as c-fos and c-jun. Phosphorylation at Ser-11 (H3S10ph), which is linked to gene activation, prevents methylation at Lys-10 (H3K9me) but facilitates acetylation of H3 and H4. Phosphorylation at Ser-11 (H3S10ph) by AURKB mediates the dissociation of HP1 proteins (CBX1, CBX3 and CBX5) from heterochromatin. Phosphorylation at Ser-11 (H3S10ph) is also an essential regulatory mechanism for neoplastic cell transformation. Phosphorylated at Ser-29 (H3S28ph) by MAP3K20 isoform 1, RPS6KA5 or AURKB during mitosis or upon ultraviolet B irradiation. Phosphorylation at Thr-7 (H3T6ph) by PRKCB is a specific tag for epigenetic transcriptional activation that prevents demethylation of Lys-5 (H3K4me) by LSD1/KDM1A. At centromeres, specifically phosphorylated at Thr-12 (H3T11ph) from prophase to early anaphase, by DAPK3 and PKN1. Phosphorylation at Thr-12 (H3T11ph) by PKN1 or isoform M2 of PKM (PKM2) is a specific tag for epigenetic transcriptional activation that promotes demethylation of Lys-10 (H3K9me) by KDM4C/JMJD2C. Phosphorylation at Tyr-42 (H3Y41ph) by JAK2 promotes exclusion of CBX5 (HP1 alpha) from chromatin. Lysine deamination at Lys-5 (H3K4all) to form allysine is mediated by LOXL2. Allysine formation by LOXL2 only takes place on H3K4me3 and results in gene repression. In terms of processing, butyrylation of histones marks active promoters and competes with histone acetylation. It is present during late spermatogenesis. Post-translationally, succinylation at Lys-80 (H3K79succ) by KAT2A takes place with a maximum frequency around the transcription start sites of genes. It gives a specific tag for epigenetic transcription activation. Serine ADP-ribosylation constitutes the primary form of ADP-ribosylation of proteins in response to DNA damage. Serine ADP-ribosylation at Ser-11 (H3S10ADPr) is mutually exclusive with phosphorylation at Ser-11 (H3S10ph) and impairs acetylation at Lys-10 (H3K9ac).

It is found in the nucleus. The protein localises to the chromosome. Core component of nucleosome. Nucleosomes wrap and compact DNA into chromatin, limiting DNA accessibility to the cellular machineries which require DNA as a template. Histones thereby play a central role in transcription regulation, DNA repair, DNA replication and chromosomal stability. DNA accessibility is regulated via a complex set of post-translational modifications of histones, also called histone code, and nucleosome remodeling. This chain is Histone H3.3C, found in Bos taurus (Bovine).